The primary structure comprises 301 residues: Nodulation protein D 3 (301 aa).

In terms of domain architecture, HTH lysR-type spans 6-63; that stretch reads LDLNLLVVLDALLTARNLTAAASSINLSQPAMSAAVARLRNYFNDELFTMSGRERVLT. The segment at residues 23-43 is a DNA-binding region (H-T-H motif); the sequence is LTAAASSINLSQPAMSAAVAR.

This sequence belongs to the LysR transcriptional regulatory family.

In terms of biological role, nodD regulates the expression of the nodABCFE genes which encode other nodulation proteins. NodD is also a negative regulator of its own expression. Binds flavonoids as inducers. The chain is Nodulation protein D 3 (nodD3) from Mesorhizobium japonicum (strain LMG 29417 / CECT 9101 / MAFF 303099) (Mesorhizobium loti (strain MAFF 303099)).